Here is a 260-residue protein sequence, read N- to C-terminus: Thiazole synthase (260 aa).

Lys-96 (schiff-base intermediate with DXP) is an active-site residue. 1-deoxy-D-xylulose 5-phosphate contacts are provided by residues Gly-157, 184–185 (AG), and 206–207 (NT).

This sequence belongs to the ThiG family. Homotetramer. Forms heterodimers with either ThiH or ThiS.

It is found in the cytoplasm. It carries out the reaction [ThiS sulfur-carrier protein]-C-terminal-Gly-aminoethanethioate + 2-iminoacetate + 1-deoxy-D-xylulose 5-phosphate = [ThiS sulfur-carrier protein]-C-terminal Gly-Gly + 2-[(2R,5Z)-2-carboxy-4-methylthiazol-5(2H)-ylidene]ethyl phosphate + 2 H2O + H(+). Its pathway is cofactor biosynthesis; thiamine diphosphate biosynthesis. Catalyzes the rearrangement of 1-deoxy-D-xylulose 5-phosphate (DXP) to produce the thiazole phosphate moiety of thiamine. Sulfur is provided by the thiocarboxylate moiety of the carrier protein ThiS. In vitro, sulfur can be provided by H(2)S. The chain is Thiazole synthase from Bradyrhizobium sp. (strain ORS 278).